We begin with the raw amino-acid sequence, 96 residues long: MKIRPLHDRVVVRRMEEERTTAGGIVIPDSATEKPMRGEIIAVGAGKVLENGDVRALAVKVGDVVLFGKYSGTEVKVDGKELVVMREDDIMGVIEK.

This sequence belongs to the GroES chaperonin family. Heptamer of 7 subunits arranged in a ring. Interacts with the chaperonin GroEL.

It localises to the cytoplasm. Together with the chaperonin GroEL, plays an essential role in assisting protein folding. The GroEL-GroES system forms a nano-cage that allows encapsulation of the non-native substrate proteins and provides a physical environment optimized to promote and accelerate protein folding. GroES binds to the apical surface of the GroEL ring, thereby capping the opening of the GroEL channel. The sequence is that of Co-chaperonin GroES from Legionella pneumophila (strain Paris).